We begin with the raw amino-acid sequence, 654 residues long: Beta-galactosidase-1-like protein (654 aa).

The first 27 residues, 1 to 27 (MAPKKPSCLRSLLLPLSLTLLLPQADT), serve as a signal peptide directing secretion. The N-linked (GlcNAc...) asparagine glycan is linked to Asn97. Residue Glu186 is the Proton donor of the active site. Asn243 carries an N-linked (GlcNAc...) asparagine glycan. Residue Glu264 is the Nucleophile of the active site.

Belongs to the glycosyl hydrolase 35 family.

Its subcellular location is the secreted. In terms of biological role, probable glycosyl hydrolase. The sequence is that of Beta-galactosidase-1-like protein (GLB1L) from Macaca fascicularis (Crab-eating macaque).